Reading from the N-terminus, the 457-residue chain is MDHLPIFCQLRDRDCLIVGGGDVAERKARLLLDAGARLTVNALAFIPQFTAWADAGMLTLVEGPFDESLLDTCWLAIAATDDDALNQRVSEAAEARRIFCNVVDAPKAASFIMPSIIDRSPLMVAVSSGGTSPVLARLLREKLESLLPLHLGQVAKYAGQLRGRVKQQFATMGERRRFWEKLFVNDRLAQSLANNDQKAITETTEQLINEPLDHRGEVVLVGAGPGDAGLLTLKGLQQIQQADVVVYDRLVSDDIMNLVRRDADRVFVGKRAGYHCVPQEEINQILLREAQKGKRVVRLKGGDPFIFGRGGEELETLCNAGIPFSVVPGITAASGCSAYSGIPLTHRDYAQSVRLITGHLKTGGELDWENLAAEKQTLVFYMGLNQAATIQQKLIEHGMPGEMPVAIVENGTAVTQRVIDGTLTQLGELAQQMNSPSLIIIGRVVGLRDKLNWFSNH.

Residues 1 to 204 (MDHLPIFCQL…NDQKAITETT (204 aa)) are precorrin-2 dehydrogenase /sirohydrochlorin ferrochelatase. Residues 22–23 (DV) and 43–44 (LA) each bind NAD(+). A Phosphoserine modification is found at Ser128. Residues 216–457 (GEVVLVGAGP…RDKLNWFSNH (242 aa)) form a uroporphyrinogen-III C-methyltransferase region. Pro225 serves as a coordination point for S-adenosyl-L-methionine. Asp248 (proton acceptor) is an active-site residue. Lys270 functions as the Proton donor in the catalytic mechanism. S-adenosyl-L-methionine-binding positions include 301 to 303 (GGD), Ile306, 331 to 332 (TA), Met382, and Gly411.

In the N-terminal section; belongs to the precorrin-2 dehydrogenase / sirohydrochlorin ferrochelatase family. This sequence in the C-terminal section; belongs to the precorrin methyltransferase family.

The enzyme catalyses uroporphyrinogen III + 2 S-adenosyl-L-methionine = precorrin-2 + 2 S-adenosyl-L-homocysteine + H(+). It catalyses the reaction precorrin-2 + NAD(+) = sirohydrochlorin + NADH + 2 H(+). The catalysed reaction is siroheme + 2 H(+) = sirohydrochlorin + Fe(2+). Its pathway is cofactor biosynthesis; adenosylcobalamin biosynthesis; precorrin-2 from uroporphyrinogen III: step 1/1. It functions in the pathway cofactor biosynthesis; adenosylcobalamin biosynthesis; sirohydrochlorin from precorrin-2: step 1/1. It participates in porphyrin-containing compound metabolism; siroheme biosynthesis; precorrin-2 from uroporphyrinogen III: step 1/1. The protein operates within porphyrin-containing compound metabolism; siroheme biosynthesis; siroheme from sirohydrochlorin: step 1/1. Its pathway is porphyrin-containing compound metabolism; siroheme biosynthesis; sirohydrochlorin from precorrin-2: step 1/1. Functionally, multifunctional enzyme that catalyzes the SAM-dependent methylations of uroporphyrinogen III at position C-2 and C-7 to form precorrin-2 via precorrin-1. Then it catalyzes the NAD-dependent ring dehydrogenation of precorrin-2 to yield sirohydrochlorin. Finally, it catalyzes the ferrochelation of sirohydrochlorin to yield siroheme. The sequence is that of Siroheme synthase from Escherichia coli (strain 55989 / EAEC).